The following is a 290-amino-acid chain: Acetylglutamate kinase (290 aa).

Residues glycine 60–glycine 61, arginine 82, and asparagine 187 contribute to the substrate site.

The protein belongs to the acetylglutamate kinase family. ArgB subfamily.

It localises to the cytoplasm. The enzyme catalyses N-acetyl-L-glutamate + ATP = N-acetyl-L-glutamyl 5-phosphate + ADP. It functions in the pathway amino-acid biosynthesis; L-arginine biosynthesis; N(2)-acetyl-L-ornithine from L-glutamate: step 2/4. Its function is as follows. Catalyzes the ATP-dependent phosphorylation of N-acetyl-L-glutamate. This chain is Acetylglutamate kinase, found in Marinobacter nauticus (strain ATCC 700491 / DSM 11845 / VT8) (Marinobacter aquaeolei).